We begin with the raw amino-acid sequence, 3797 residues long: A-kinase anchor protein 9 (3797 aa).

The interval 1–140 (MEDEERQRKL…SSEQGAQSSQ (140 aa)) is disordered. Polar residues-rich tracts occupy residues 50–65 (HTDQ…SSQR) and 92–108 (EIST…NGCN). A compositionally biased stretch (basic and acidic residues) spans 115–124 (KPTDPLREEE). Residue S139 is modified to Phosphoserine. Coiled-coil stretches lie at residues 140 to 607 (QTCL…LRTQ) and 640 to 976 (IHYK…LLAN). S1288 is subject to Phosphoserine. 3 disordered regions span residues 1643–1668 (STQT…LERS), 2323–2343 (VVST…EESF), and 2419–2454 (SDNL…ASRT). 2 stretches are compositionally biased toward basic and acidic residues: residues 1648 to 1668 (DGHD…LERS) and 2328 to 2343 (QQRE…EESF). Residues 1808–2377 (SRLQAAVEKL…MTHMNNVLKE (570 aa)) are a coiled coil. The segment covering 2438 to 2454 (KQTSLTRLQESPEASRT) has biased composition (polar residues). A PKA-RII subunit binding domain region spans residues 2498 to 2510 (DLQRSLEKFAAAL). Disordered stretches follow at residues 2604–2695 (LEEA…SSSG) and 3271–3296 (MEKD…QKKM). Residues 2606 to 2615 (EAEERPEEGG) are compositionally biased toward acidic residues. Residues 2642–2669 (PLTEAKEKLSYSLEKEKRTGEQESREAP) are compositionally biased toward basic and acidic residues. Positions 2975–3325 (LQKADRRSLL…QVYKLDLEGK (351 aa)) form a coiled coil. Polar residues predominate over residues 3279–3294 (QKTLQTEQEANTQGQK). Phosphoserine is present on residues S3732, S3755, and S3787.

As to quaternary structure, interacts with the regulatory region of protein kinase N (PKN), protein phosphatase 2A (PP2A), protein phosphatase 1 (PP1) and the immature non-phosphorylated form of PKC epsilon. Interacts with CIP4 and FNBP1. Interacts with chloride intracellular channel proteins CLIC1, CLIC4 and CLIC5. CSNK1D binding promotes its centrosomal subcellular location. Interacts with GM130/GOLGA2; leading to recruitment to the Golgi apparatus. Interacts with KCNQ1; targets protein kinase A (PKA) catalytic and regulatory subunits and protein phosphatase 1 (PP1), to the heterodimer KCNQ1-KCNE1. Interacts with PDE4DIP isoform 2; this interaction stabilizes both proteins. In complex with PDE4DIP isoform 2, recruits CAMSAP2 to the Golgi apparatus. Forms a pericentrosomal complex with CDK5RAP2, EB1/MAPRE1 and PDE4DIP isoform 2; within this complex, MAPRE1 binding to CDK5RAP2 may be mediated by PDE4DIP. Interacts with MAPRE1 and MAPRE3. Interacts (via C-terminus) with CAMSAP2; this interaction is much stronger in the presence of PDE4DIP isoform 2. Interacts with CAMSAP3. Interacts (via C-terminus) with the gamma-tubulin ring complex (gamma-TuRC), composed of gamma-tubulin, TUBGCP2, TUBGCP3, TUBGCP4, TUBGCP5 and TUBGCP6.

Its subcellular location is the golgi apparatus. It is found in the cytoplasm. The protein localises to the cytoskeleton. The protein resides in the microtubule organizing center. It localises to the centrosome. Scaffolding protein that assembles several protein kinases and phosphatases on the centrosome and Golgi apparatus. Required to maintain the integrity of the Golgi apparatus. Required for microtubule nucleation at the cis-side of the Golgi apparatus. Required for association of the centrosomes with the poles of the bipolar mitotic spindle during metaphase. In complex with PDE4DIP isoform 2/MMG8/SMYLE, recruits CAMSAP2 to the Golgi apparatus and tethers non-centrosomal minus-end microtubules to the Golgi, an important step for polarized cell movement. In complex with PDE4DIP isoform 2, EB1/MAPRE1 and CDK5RAP2, contributes to microtubules nucleation and extension also from the centrosome to the cell periphery. This Mus musculus (Mouse) protein is A-kinase anchor protein 9 (Akap9).